We begin with the raw amino-acid sequence, 327 residues long: Lipoyl synthase (327 aa).

Residues cysteine 66, cysteine 71, cysteine 77, cysteine 92, cysteine 96, cysteine 99, and serine 306 each contribute to the [4Fe-4S] cluster site. Residues 78-295 form the Radical SAM core domain; that stretch reads FSKGTATFMI…EKEAYELGFS (218 aa).

The protein belongs to the radical SAM superfamily. Lipoyl synthase family. It depends on [4Fe-4S] cluster as a cofactor.

Its subcellular location is the cytoplasm. It carries out the reaction [[Fe-S] cluster scaffold protein carrying a second [4Fe-4S](2+) cluster] + N(6)-octanoyl-L-lysyl-[protein] + 2 oxidized [2Fe-2S]-[ferredoxin] + 2 S-adenosyl-L-methionine + 4 H(+) = [[Fe-S] cluster scaffold protein] + N(6)-[(R)-dihydrolipoyl]-L-lysyl-[protein] + 4 Fe(3+) + 2 hydrogen sulfide + 2 5'-deoxyadenosine + 2 L-methionine + 2 reduced [2Fe-2S]-[ferredoxin]. The protein operates within protein modification; protein lipoylation via endogenous pathway; protein N(6)-(lipoyl)lysine from octanoyl-[acyl-carrier-protein]: step 2/2. Catalyzes the radical-mediated insertion of two sulfur atoms into the C-6 and C-8 positions of the octanoyl moiety bound to the lipoyl domains of lipoate-dependent enzymes, thereby converting the octanoylated domains into lipoylated derivatives. This Neisseria meningitidis serogroup A / serotype 4A (strain DSM 15465 / Z2491) protein is Lipoyl synthase.